The following is a 54-amino-acid chain: Soricidin (54 aa).

3 disulfides stabilise this stretch: C2–C23, C6–C27, and C9–C41.

This sequence belongs to the opioid neuropeptide precursor family. In terms of assembly, member of a multiprotein complex. As to expression, salivary gland.

Its subcellular location is the secreted. Its function is as follows. Paralytic toxin that immobilizes a mealworm for 7 days. Inhibits the transient receptor potential cation channel subfamily V member 6 (TRPV6). The sequence is that of Soricidin from Blarina brevicauda (Northern short-tailed shrew).